The primary structure comprises 658 residues: Glycogen debranching enzyme (658 aa).

The active-site Nucleophile is Asp-335. The active-site Proton donor is Glu-370. Basic and acidic residues predominate over residues 457–468 (NDANGEGNRDGT). Positions 457-481 (NDANGEGNRDGTDSNFSNNHGTEGL) are disordered.

It belongs to the glycosyl hydrolase 13 family.

It catalyses the reaction Hydrolysis of (1-&gt;6)-alpha-D-glucosidic linkages to branches with degrees of polymerization of three or four glucose residues in limit dextrin.. It participates in glycan degradation; glycogen degradation. Removes maltotriose and maltotetraose chains that are attached by 1,6-alpha-linkage to the limit dextrin main chain, generating a debranched limit dextrin. This chain is Glycogen debranching enzyme, found in Pectobacterium atrosepticum (strain SCRI 1043 / ATCC BAA-672) (Erwinia carotovora subsp. atroseptica).